Consider the following 197-residue polypeptide: Lipoprotein signal peptidase (197 aa).

A run of 2 helical transmembrane segments spans residues 73–93 (SNAI…YLMI) and 97–117 (TIGS…NLID). Residues aspartate 126 and aspartate 144 contribute to the active site. A helical transmembrane segment spans residues 135–155 (YSFPVFNLADCFITIGVIILI).

It belongs to the peptidase A8 family.

It localises to the cell inner membrane. It catalyses the reaction Release of signal peptides from bacterial membrane prolipoproteins. Hydrolyzes -Xaa-Yaa-Zaa-|-(S,diacylglyceryl)Cys-, in which Xaa is hydrophobic (preferably Leu), and Yaa (Ala or Ser) and Zaa (Gly or Ala) have small, neutral side chains.. It participates in protein modification; lipoprotein biosynthesis (signal peptide cleavage). This protein specifically catalyzes the removal of signal peptides from prolipoproteins. This chain is Lipoprotein signal peptidase, found in Rickettsia felis (strain ATCC VR-1525 / URRWXCal2) (Rickettsia azadi).